An 86-amino-acid polypeptide reads, in one-letter code: Small ribosomal subunit protein bS16 (86 aa).

It belongs to the bacterial ribosomal protein bS16 family.

This chain is Small ribosomal subunit protein bS16, found in Thermoanaerobacter sp. (strain X514).